Here is a 560-residue protein sequence, read N- to C-terminus: DNA ligase B (560 aa).

Catalysis depends on Lys-124, which acts as the N6-AMP-lysine intermediate.

This sequence belongs to the NAD-dependent DNA ligase family. LigB subfamily.

It catalyses the reaction NAD(+) + (deoxyribonucleotide)n-3'-hydroxyl + 5'-phospho-(deoxyribonucleotide)m = (deoxyribonucleotide)n+m + AMP + beta-nicotinamide D-nucleotide.. In terms of biological role, catalyzes the formation of phosphodiester linkages between 5'-phosphoryl and 3'-hydroxyl groups in double-stranded DNA using NAD as a coenzyme and as the energy source for the reaction. The chain is DNA ligase B from Escherichia coli O81 (strain ED1a).